Consider the following 210-residue polypeptide: Ribosomal RNA small subunit methyltransferase G (210 aa).

Residues glycine 76, leucine 81, 127–128, and arginine 142 contribute to the S-adenosyl-L-methionine site; that span reads VE.

It belongs to the methyltransferase superfamily. RNA methyltransferase RsmG family.

It localises to the cytoplasm. The enzyme catalyses guanosine(527) in 16S rRNA + S-adenosyl-L-methionine = N(7)-methylguanosine(527) in 16S rRNA + S-adenosyl-L-homocysteine. In terms of biological role, specifically methylates the N7 position of guanine in position 527 of 16S rRNA. The sequence is that of Ribosomal RNA small subunit methyltransferase G from Vibrio atlanticus (strain LGP32) (Vibrio splendidus (strain Mel32)).